The sequence spans 399 residues: Elongation factor Tu (399 aa).

Positions 10–209 (KPHVNIGTIG…AVDEYIPEPT (200 aa)) constitute a tr-type G domain. A G1 region spans residues 19-26 (GHVDHGKT). Position 19 to 26 (19 to 26 (GHVDHGKT)) interacts with GTP. T26 contributes to the Mg(2+) binding site. The G2 stretch occupies residues 60–64 (GITIA). The G3 stretch occupies residues 81–84 (DCPG). Residues 81–85 (DCPGH) and 136–139 (NKED) contribute to the GTP site. Positions 136 to 139 (NKED) are G4. The interval 174-176 (SAK) is G5.

This sequence belongs to the TRAFAC class translation factor GTPase superfamily. Classic translation factor GTPase family. EF-Tu/EF-1A subfamily. In terms of assembly, monomer.

The protein resides in the cytoplasm. It carries out the reaction GTP + H2O = GDP + phosphate + H(+). Functionally, GTP hydrolase that promotes the GTP-dependent binding of aminoacyl-tRNA to the A-site of ribosomes during protein biosynthesis. In Sulfurimonas denitrificans (strain ATCC 33889 / DSM 1251) (Thiomicrospira denitrificans (strain ATCC 33889 / DSM 1251)), this protein is Elongation factor Tu.